Here is a 90-residue protein sequence, read N- to C-terminus: Small ribosomal subunit protein uS15c (90 aa).

Belongs to the universal ribosomal protein uS15 family. As to quaternary structure, part of the 30S ribosomal subunit.

It is found in the plastid. It localises to the chloroplast. This Buxus microphylla (Littleleaf boxwood) protein is Small ribosomal subunit protein uS15c (rps15).